A 1035-amino-acid chain; its full sequence is Translation initiation factor IF-2 (1035 aa).

Basic and acidic residues predominate over residues 56-66 (KDDKSNTDDNK). 2 disordered regions span residues 56–80 (KDDK…SSEA) and 114–402 (ANDA…VIKN). Over residues 68–78 (ASAHSVAQHSS) the composition is skewed to polar residues. Basic and acidic residues-rich tracts occupy residues 114 to 137 (ANDA…RVET) and 146 to 200 (LVRE…EIKD). The segment covering 219-228 (DSATNVNLNE) has biased composition (polar residues). Residues 229-238 (SIDKDKKTND) are compositionally biased toward basic and acidic residues. The span at 239–253 (NRQVSTDNSAVNNEE) shows a compositional bias: polar residues. A compositionally biased stretch (basic and acidic residues) spans 259–315 (LNKKDMDKKNNNKKNEAKKNAEKKNEAKKNEKNDNKGGNAKKNEHRSPDMKKNDSNR). A compositionally biased stretch (polar residues) spans 316-325 (PQDANKQNSK). 2 stretches are compositionally biased toward basic and acidic residues: residues 327–347 (AADK…EIPK) and 354–385 (QKEE…KEQP). The tr-type G domain maps to 537 to 706 (PRPPVVVVMG…LLAADMLELK (170 aa)). A G1 region spans residues 546-553 (GHVDHGKT). 546–553 (GHVDHGKT) lines the GTP pocket. The tract at residues 571-575 (GITQH) is G2. Residues 592–595 (DTPG) form a G3 region. GTP is bound by residues 592–596 (DTPGH) and 646–649 (NKID). The tract at residues 646–649 (NKID) is G4. Residues 682 to 684 (SAK) are G5.

It belongs to the TRAFAC class translation factor GTPase superfamily. Classic translation factor GTPase family. IF-2 subfamily.

Its subcellular location is the cytoplasm. Functionally, one of the essential components for the initiation of protein synthesis. Protects formylmethionyl-tRNA from spontaneous hydrolysis and promotes its binding to the 30S ribosomal subunits. Also involved in the hydrolysis of GTP during the formation of the 70S ribosomal complex. This chain is Translation initiation factor IF-2, found in Acetivibrio thermocellus (strain ATCC 27405 / DSM 1237 / JCM 9322 / NBRC 103400 / NCIMB 10682 / NRRL B-4536 / VPI 7372) (Clostridium thermocellum).